The sequence spans 436 residues: MVLPTVAIVGRPNVGKSTLFNRIAGERISIVEDVEGVTRDRIYATGEWLNRQFSLIDTGGIDDVDAPFMEQIKHQAQIAMEEADVIVFVVSGKEGVTDADEYVSKILYRTNTPVILAVNKVDNPEMRNDIYDFYSLGLGDPYPVSSVHGIGTGDVLDEIVENLPVEEAEENDDIIRFSLIGRPNVGKSSLINAILGEDRVIASPVAGTTRDAIDTHFTDADGQEFTMIDTAGMRKSGKIYENTEKYSVMRAMRAIDRSDVVLMVINAEEGIREYDKRIAGFAHEAGKGMIIVVNKWDTIDKDNHTVAKWEADIRDQFQFLTYAPIIFVSALTKQRLNKLPDLIKRISESQNKRIPSAVLNDVIMDAIAINPTPTDKGKRLKIFYATQVSVKPPTFVVFVNEEELMHFSYLRFLENQIRAAFTFEGTPIHLIARKRK.

2 EngA-type G domains span residues 4 to 167 (PTVA…PVEE) and 175 to 351 (IRFS…ESQN). GTP-binding positions include 10–17 (GRPNVGKS), 57–61 (DTGGI), 119–122 (NKVD), 181–188 (GRPNVGKS), 229–233 (DTAGM), and 294–297 (NKWD). In terms of domain architecture, KH-like spans 352 to 436 (KRIPSAVLND…PIHLIARKRK (85 aa)).

This sequence belongs to the TRAFAC class TrmE-Era-EngA-EngB-Septin-like GTPase superfamily. EngA (Der) GTPase family. In terms of assembly, associates with the 50S ribosomal subunit.

In terms of biological role, GTPase that plays an essential role in the late steps of ribosome biogenesis. In Streptococcus pyogenes serotype M28 (strain MGAS6180), this protein is GTPase Der.